Consider the following 294-residue polypeptide: Proteasome subunit beta (294 aa).

Residues 1–65 (MTADRPALRT…MESGDLAPHG (65 aa)) constitute a propeptide, removed in mature form; by autocatalysis. The active-site Nucleophile is the T66.

This sequence belongs to the peptidase T1B family. As to quaternary structure, the 20S proteasome core is composed of 14 alpha and 14 beta subunits that assemble into four stacked heptameric rings, resulting in a barrel-shaped structure. The two inner rings, each composed of seven catalytic beta subunits, are sandwiched by two outer rings, each composed of seven alpha subunits. The catalytic chamber with the active sites is on the inside of the barrel. Has a gated structure, the ends of the cylinder being occluded by the N-termini of the alpha-subunits. Is capped by the proteasome-associated ATPase, ARC.

It is found in the cytoplasm. It catalyses the reaction Cleavage of peptide bonds with very broad specificity.. The protein operates within protein degradation; proteasomal Pup-dependent pathway. Its activity is regulated as follows. The formation of the proteasomal ATPase ARC-20S proteasome complex, likely via the docking of the C-termini of ARC into the intersubunit pockets in the alpha-rings, may trigger opening of the gate for substrate entry. Interconversion between the open-gate and close-gate conformations leads to a dynamic regulation of the 20S proteasome proteolysis activity. Functionally, component of the proteasome core, a large protease complex with broad specificity involved in protein degradation. The chain is Proteasome subunit beta from Rhodococcus opacus (strain B4).